Here is a 541-residue protein sequence, read N- to C-terminus: Protein yellow (541 aa).

Residues 1-21 (MFQDKGWILVTLITLVTPSWA) form the signal peptide. Residues Asn-144 and Asn-215 are each glycosylated (N-linked (GlcNAc...) asparagine). The tract at residues 443 to 463 (QKPQTSWASSPPPPSRTYLPA) is disordered.

This sequence belongs to the major royal jelly protein family.

It is found in the secreted. In terms of biological role, controls the pigmentation pattern of the adult cuticle and larval mouth parts. In Drosophila mauritiana (Fruit fly), this protein is Protein yellow (y).